The chain runs to 130 residues: Small ribosomal subunit protein uS9 (130 aa).

Belongs to the universal ribosomal protein uS9 family.

In Verminephrobacter eiseniae (strain EF01-2), this protein is Small ribosomal subunit protein uS9.